Here is a 66-residue protein sequence, read N- to C-terminus: Large ribosomal subunit protein uL29 (66 aa).

Belongs to the universal ribosomal protein uL29 family.

In Nitrosococcus oceani (strain ATCC 19707 / BCRC 17464 / JCM 30415 / NCIMB 11848 / C-107), this protein is Large ribosomal subunit protein uL29.